The primary structure comprises 330 residues: Polygalacturonase inhibitor 2 (330 aa).

Residues 1 to 21 (MDKTMTLFLLLSTLLLTTSLA) form the signal peptide. Intrachain disulfides connect Cys-25–Cys-55 and Cys-56–Cys-63. LRR repeat units lie at residues 69-93 (NHRV…VGDL), 94-117 (PYLT…TIAK), 118-141 (LKNL…FLSQ), 142-166 (LKNL…LSSL), 167-192 (RKLE…TFSG), 194-215 (VPSL…LGNP), 217-237 (FYRI…LFGA), 238-260 (KKTT…KVKL), 261-285 (AKTL…WSKA), and 287-308 (FQLL…EYIQ). N-linked (GlcNAc...) asparagine glycosylation is found at Asn-106, Asn-120, and Asn-130. N-linked (GlcNAc...) asparagine glycosylation occurs at Asn-291. 2 disulfide bridges follow: Cys-298–Cys-320 and Cys-322–Cys-329.

It belongs to the polygalacturonase-inhibiting protein family.

Its subcellular location is the secreted. It localises to the cell wall. The protein localises to the membrane. Its function is as follows. Inhibitor of fungal polygalacturonase. It is an important factor for plant resistance to phytopathogenic fungi. This is Polygalacturonase inhibitor 2 (PGIP2) from Arabidopsis thaliana (Mouse-ear cress).